Reading from the N-terminus, the 252-residue chain is 2-succinyl-6-hydroxy-2,4-cyclohexadiene-1-carboxylate synthase (252 aa).

This sequence belongs to the AB hydrolase superfamily. MenH family. As to quaternary structure, monomer.

It catalyses the reaction 5-enolpyruvoyl-6-hydroxy-2-succinyl-cyclohex-3-ene-1-carboxylate = (1R,6R)-6-hydroxy-2-succinyl-cyclohexa-2,4-diene-1-carboxylate + pyruvate. Its pathway is quinol/quinone metabolism; 1,4-dihydroxy-2-naphthoate biosynthesis; 1,4-dihydroxy-2-naphthoate from chorismate: step 3/7. The protein operates within quinol/quinone metabolism; menaquinone biosynthesis. Its function is as follows. Catalyzes a proton abstraction reaction that results in 2,5-elimination of pyruvate from 2-succinyl-5-enolpyruvyl-6-hydroxy-3-cyclohexene-1-carboxylate (SEPHCHC) and the formation of 2-succinyl-6-hydroxy-2,4-cyclohexadiene-1-carboxylate (SHCHC). This Escherichia coli (strain ATCC 8739 / DSM 1576 / NBRC 3972 / NCIMB 8545 / WDCM 00012 / Crooks) protein is 2-succinyl-6-hydroxy-2,4-cyclohexadiene-1-carboxylate synthase.